Here is a 643-residue protein sequence, read N- to C-terminus: ATP-dependent RNA helicase DeaD (643 aa).

The short motif at 6-34 (TTFADLGLKAPILEALTDLGYEKPSPIQA) is the Q motif element. Positions 37–208 (IPHLLDGRDV…RRFMKEPQEV (172 aa)) constitute a Helicase ATP-binding domain. 50 to 57 (AQTGSGKT) lines the ATP pocket. Positions 156–159 (DEAD) match the DEAD box motif. The region spanning 232 to 379 (KNEALVRFLE…EVELPNAELL (148 aa)) is the Helicase C-terminal domain. Disordered stretches follow at residues 440–482 (VPPV…KRER) and 557–643 (MNMQ…GGDA). 2 stretches are compositionally biased toward basic and acidic residues: residues 448 to 482 (PRRE…KRER) and 567 to 643 (PRTE…GGDA).

It belongs to the DEAD box helicase family. DeaD/CsdA subfamily.

It is found in the cytoplasm. It carries out the reaction ATP + H2O = ADP + phosphate + H(+). DEAD-box RNA helicase involved in various cellular processes at low temperature, including ribosome biogenesis, mRNA degradation and translation initiation. This is ATP-dependent RNA helicase DeaD from Klebsiella pneumoniae.